The primary structure comprises 373 residues: Putative F-box protein At1g76830 (373 aa).

An F-box domain is found at 4 to 49; that stretch reads ITSFENLPEELKREILLRMSPNSLVTCSRVSKKLASMIRTKSFKEL.

The chain is Putative F-box protein At1g76830 from Arabidopsis thaliana (Mouse-ear cress).